We begin with the raw amino-acid sequence, 322 residues long: Secretion system apparatus protein SsaQ (322 aa).

The protein belongs to the FliN/MopA/SpaO family.

In terms of biological role, part of a type III secretion system. This is Secretion system apparatus protein SsaQ (ssaQ) from Salmonella typhimurium (strain LT2 / SGSC1412 / ATCC 700720).